Reading from the N-terminus, the 124-residue chain is Small ribosomal subunit protein uS12 (124 aa).

Position 89 is a 3-methylthioaspartic acid (D89). A disordered region spans residues 105–124 (QGVKNRKQARSRYGAKKEKS). Positions 108–118 (KNRKQARSRYG) are enriched in basic residues.

It belongs to the universal ribosomal protein uS12 family. Part of the 30S ribosomal subunit. Contacts proteins S8 and S17. May interact with IF1 in the 30S initiation complex.

In terms of biological role, with S4 and S5 plays an important role in translational accuracy. Interacts with and stabilizes bases of the 16S rRNA that are involved in tRNA selection in the A site and with the mRNA backbone. Located at the interface of the 30S and 50S subunits, it traverses the body of the 30S subunit contacting proteins on the other side and probably holding the rRNA structure together. The combined cluster of proteins S8, S12 and S17 appears to hold together the shoulder and platform of the 30S subunit. This chain is Small ribosomal subunit protein uS12, found in Mycobacterium leprae (strain Br4923).